The following is a 67-amino-acid chain: Non-specific lipid-transfer protein 2P (67 aa).

Disulfide bonds link C2-C34, C10-C24, C25-C60, and C36-C67.

Its function is as follows. Transfer lipids across membranes. May play a role in plant defense or in the biosynthesis of cuticle layers. This Triticum aestivum (Wheat) protein is Non-specific lipid-transfer protein 2P.